A 137-amino-acid chain; its full sequence is Large ribosomal subunit protein uL16 (137 aa).

It belongs to the universal ribosomal protein uL16 family. Part of the 50S ribosomal subunit.

Functionally, binds 23S rRNA and is also seen to make contacts with the A and possibly P site tRNAs. In Stenotrophomonas maltophilia (strain R551-3), this protein is Large ribosomal subunit protein uL16.